The following is a 446-amino-acid chain: Glucose transporter GlcP (446 aa).

The Cytoplasmic segment spans residues 1–6 (MKANKY). Residues 7 to 31 (LIFILGALGGLLYGYDNGVISGALL) form a helical membrane-spanning segment. The Extracellular portion of the chain corresponds to 32 to 38 (FIHKDIP). The chain crosses the membrane as a helical span at residues 39-64 (LNSTTEGIVVSSMLIGAIVGAGSSGP). Over 65 to 70 (LADKLG) the chain is Cytoplasmic. A helical membrane pass occupies residues 71–90 (RRRLVMLIAIVFIIGALILA). Residues 91–94 (ASTN) are Extracellular-facing. Residues 95–122 (LALLIIGRLIIGLAVGGSMSTVPVYLSE) traverse the membrane as a helical segment. Residues 123-129 (MAPTEYR) are Cytoplasmic-facing. The chain crosses the membrane as a helical span at residues 130–152 (GSLGSLNQLMITIGILAAYLVNY). Residues 153-154 (AF) lie on the Extracellular side of the membrane. Residues 155 to 180 (ADIEGWRWMLGLAVVPSVILLVGIYF) form a helical membrane-spanning segment. Residues 181–234 (MPESPRWLLENRNEEAARQVMKITYDDSEIDKELKEMKEINAISESTWTVIKSP) lie on the Cytoplasmic side of the membrane. A helical transmembrane segment spans residues 235–269 (WLGRILIVGCIFAIFQQFIGINAVIFYSSSIFAKA). Topologically, residues 270-272 (GLG) are extracellular. The chain crosses the membrane as a helical span at residues 273-295 (EAASILGSVGIGTINVLVTIVAI). Topologically, residues 296-303 (FVVDKIDR) are cytoplasmic. Residues 304–324 (KKLLVGGNIGMIASLLIMAIL) form a helical membrane-spanning segment. Topologically, residues 325 to 329 (IWTIG) are extracellular. A helical transmembrane segment spans residues 330 to 363 (IASSAWIIIVCLSLFIVFFGISWGPVLWVMLPEL). Residues 364–370 (FPMRARG) are Cytoplasmic-facing. A helical membrane pass occupies residues 371-399 (AATGISALVLNIGTLIVSLFFPILSDALS). The Extracellular segment spans residues 400–401 (TE). Residues 402 to 420 (WVFLIFAFIGVLAMIFVIK) traverse the membrane as a helical segment. The Cytoplasmic portion of the chain corresponds to 421-446 (FLPETRGRSLEEIEYELRERTGARTE).

It belongs to the major facilitator superfamily. Sugar transporter (TC 2.A.1.1) family.

The protein resides in the cell membrane. Its activity is regulated as follows. Inhibited by carbonyl cyanide m-chlorophenylhydrazone (CCCP) and by the human glucose transport inhibitors cytochalasin B, phloretin, and forskolin. Transporter highly specific for glucose uptake. This is Glucose transporter GlcP from Staphylococcus epidermidis (strain ATCC 12228 / FDA PCI 1200).